The following is a 654-amino-acid chain: Fatty acid photodecarboxylase, chloroplastic (654 aa).

The transit peptide at 1 to 62 directs the protein to the chloroplast; the sequence is MASITSRASA…RRGGALSARA (62 aa). FAD-binding positions include 93-94, glutamate 114, leucine 162, serine 166, 170-173, and valine 298; these read TA and NATL. 4 residues coordinate hexadecanoate: cysteine 432, arginine 451, tyrosine 466, and glutamine 486. Glycine 622 provides a ligand contact to FAD.

Belongs to the GMC oxidoreductase family. FAD is required as a cofactor.

Its subcellular location is the plastid. It localises to the chloroplast. The catalysed reaction is a long-chain fatty acid + hnu + H(+) = a long-chain alkane + CO2. It carries out the reaction hnu + hexadecanoate + H(+) = pentadecane + CO2. The enzyme catalyses hnu + octadecanoate + H(+) = heptadecane + CO2. It catalyses the reaction heptadecanoate + hnu + H(+) = hexadecane + CO2. The catalysed reaction is hnu + tetradecanoate + H(+) = tridecane + CO2. It carries out the reaction octanoate + hnu + H(+) = heptane + CO2. Its activity is regulated as follows. Activated by blue light and repressed by red light. Functionally, catalyzes the decarboxylation of free fatty acids to n-alkanes or n-alkenes in response to blue light. Substrate preference is toward fatty acids with C16 or C17 chains. Converts n-octanoic acid (C8 chain) more efficiently than palmitate (n-hexadecanoic acid, C16 chain) into n-heptane (C7 chain) and n-pentadecane (C15 chain), respectively, partly due to an autocatalytic effect of its n-heptane product. Saturated fatty acids are converted to alkanes, not alkenes. The decarboxylation is initiated through electron abstraction from the fatty acid by the photo-excited FAD. This is Fatty acid photodecarboxylase, chloroplastic from Chlorella variabilis (Green alga).